A 255-amino-acid chain; its full sequence is 1-(5-phosphoribosyl)-5-[(5-phosphoribosylamino)methylideneamino] imidazole-4-carboxamide isomerase (255 aa).

Asp8 (proton acceptor) is an active-site residue. Asp129 (proton donor) is an active-site residue.

Belongs to the HisA/HisF family.

The protein resides in the cytoplasm. The enzyme catalyses 1-(5-phospho-beta-D-ribosyl)-5-[(5-phospho-beta-D-ribosylamino)methylideneamino]imidazole-4-carboxamide = 5-[(5-phospho-1-deoxy-D-ribulos-1-ylimino)methylamino]-1-(5-phospho-beta-D-ribosyl)imidazole-4-carboxamide. The protein operates within amino-acid biosynthesis; L-histidine biosynthesis; L-histidine from 5-phospho-alpha-D-ribose 1-diphosphate: step 4/9. The protein is 1-(5-phosphoribosyl)-5-[(5-phosphoribosylamino)methylideneamino] imidazole-4-carboxamide isomerase of Prochlorococcus marinus subsp. pastoris (strain CCMP1986 / NIES-2087 / MED4).